We begin with the raw amino-acid sequence, 264 residues long: Secretory carrier-associated membrane protein 4 (264 aa).

The interval 1–33 (MNRHHDPNPFDEDEEIVNPFSKGGGRVPAASRP) is disordered. The Cytoplasmic segment spans residues 1-122 (MNRHHDPNPF…AQKLQYLAFA (122 aa)). Positions 51–85 (MNDSSQKQRKLADWEAELRKKEMDIKRREEAIAKF) form a coiled coil. A run of 4 helical transmembrane segments spans residues 123–143 (SWLGIVLCLVFNVIATMVCWI), 150–170 (IFFLATIYALIGCPLSYVLWY), 185–205 (FGWFFFTYLIHIGFCIVAAIA), and 233–253 (IFYFIGFGLFCLESLLSLWVL). The Cytoplasmic segment spans residues 254–264 (QKIYLYFRGNK).

This sequence belongs to the SCAMP family.

It localises to the cell membrane. The protein localises to the cytoplasmic vesicle. The protein resides in the secretory vesicle membrane. Functionally, probably involved in membrane trafficking. This Arabidopsis thaliana (Mouse-ear cress) protein is Secretory carrier-associated membrane protein 4 (SCAMP4).